Here is a 165-residue protein sequence, read N- to C-terminus: Copper-resistant cuproprotein CopI (165 aa).

An N-terminal signal peptide occupies residues 1-23 (MKNRILRPALLCVAALFATTAQA). Residues 25–42 (AGHDHGSAHAGAHAHDAD) are compositionally biased toward basic and acidic residues. A disordered region spans residues 25-50 (AGHDHGSAHAGAHAHDADTPYGRPGD). Cu(2+) contacts are provided by histidine 93, cysteine 148, histidine 153, and methionine 158.

It belongs to the CopI family. Monomer.

It is found in the periplasm. Involved in copper tolerance. Required for copper resistance under both aerobic and anaerobic photosynthetic growth conditions. Binds copper. Could be an important defense against copper in the periplasm and may protect not only c type cytochromes but also other proteins with cysteine residues from copper ions that may catalyze nonnative disulfide bond formation. This chain is Copper-resistant cuproprotein CopI, found in Rubrivivax gelatinosus (Rhodocyclus gelatinosus).